The sequence spans 370 residues: MTNANVDATPLTTKPSQDGFYMPAEWAAQQAVWMIWPHRPDNWRSAGAYAQATFAKVADAIGGATPVYMGVPKAFLAEAQKVMPSHVTLVEMDSNDCWARDTGPTVVINAEGECRGVDWGFNAWGGHNGGLYFPWDKDEQVAQQMLKQHGFARYSAPLILEGGSIHVDGEGTCMTSAECLLNANRNPDLTKEQIEDLLRDYLNVKQFIWLQDGVYMDETDGHIDNMCCFARPGEVILHWTDDEADPQYPRSKAALDVLQNTVDAQGRKLKIHLLPQPGPLYCTEEESLGVTEGTGVPRTAGERLAGSYVNFLITNHRIVFPLLDPTTDDIAAQKLQEIFPEYEIVGVPAREILLGGGNIHCITQQIPSGK.

The Amidino-cysteine intermediate role is filled by C361.

Belongs to the agmatine deiminase family.

The catalysed reaction is agmatine + H2O = N-carbamoylputrescine + NH4(+). In Shewanella baltica (strain OS185), this protein is Putative agmatine deiminase.